We begin with the raw amino-acid sequence, 252 residues long: 3-dehydroquinate dehydratase (252 aa).

3-dehydroquinate is bound by residues Ser21, 46-48 (EWR), and Arg82. His143 acts as the Proton donor/acceptor in catalysis. The active-site Schiff-base intermediate with substrate is Lys170. Arg213, Ser232, and Gln236 together coordinate 3-dehydroquinate.

The protein belongs to the type-I 3-dehydroquinase family. As to quaternary structure, homodimer.

It carries out the reaction 3-dehydroquinate = 3-dehydroshikimate + H2O. Its pathway is metabolic intermediate biosynthesis; chorismate biosynthesis; chorismate from D-erythrose 4-phosphate and phosphoenolpyruvate: step 3/7. Its function is as follows. Involved in the third step of the chorismate pathway, which leads to the biosynthesis of aromatic amino acids. Catalyzes the cis-dehydration of 3-dehydroquinate (DHQ) and introduces the first double bond of the aromatic ring to yield 3-dehydroshikimate. The chain is 3-dehydroquinate dehydratase from Shigella boydii serotype 4 (strain Sb227).